The primary structure comprises 284 residues: Release factor glutamine methyltransferase (284 aa).

S-adenosyl-L-methionine contacts are provided by residues 123 to 127 (GTGTG), Asp-146, Trp-174, and Asn-189. 189 to 192 (NPPY) serves as a coordination point for substrate.

Belongs to the protein N5-glutamine methyltransferase family. PrmC subfamily.

The catalysed reaction is L-glutaminyl-[peptide chain release factor] + S-adenosyl-L-methionine = N(5)-methyl-L-glutaminyl-[peptide chain release factor] + S-adenosyl-L-homocysteine + H(+). Its function is as follows. Methylates the class 1 translation termination release factors RF1/PrfA and RF2/PrfB on the glutamine residue of the universally conserved GGQ motif. This chain is Release factor glutamine methyltransferase, found in Francisella tularensis subsp. tularensis (strain SCHU S4 / Schu 4).